The following is a 1033-amino-acid chain: Tyrosine-protein kinase-like otk (1033 aa).

The N-terminal stretch at M1–A22 is a signal peptide. At S23–A581 the chain is on the extracellular side. Ig-like C2-type domains are found at residues S25–S108, P109–S199, P251–S365, P368–N463, and P468–V558. N-linked (GlcNAc...) asparagine glycosylation occurs at N39. Intrachain disulfides connect C46-C95, C137-C188, C276-C354, and C399-C447. 7 N-linked (GlcNAc...) asparagine glycosylation sites follow: N336, N417, N429, N444, N457, N512, and N524. C490 and C542 are disulfide-bonded. A helical membrane pass occupies residues V582–W602. The Cytoplasmic segment spans residues C603 to K1033. Disordered stretches follow at residues L617–A679 and S718–M760. Over residues K655 to R673 the composition is skewed to polar residues. At S678 the chain carries Phosphoserine. The 337-residue stretch at L692–M1028 folds into the Protein kinase; inactive domain. Over residues T720–S731 the composition is skewed to basic and acidic residues.

It belongs to the protein kinase superfamily. Tyr protein kinase family. Insulin receptor subfamily. In terms of assembly, interacts with plexA; component of a receptor complex that mediates the repulsive signaling in response to Semaphorin ligands.

It localises to the cell membrane. Functionally, acts as a calcium-dependent, homophilic cell adhesion molecule that regulates neural recognition during the development of the nervous system. Component of the repulsive Plexin signaling response to regulate motor axon guidance at the embryonic stage. Also component of a receptor complex that is required in the adult visual system to innervate the lamina layer; specific targeting of R1-R6 axons. The polypeptide is Tyrosine-protein kinase-like otk (Drosophila erecta (Fruit fly)).